The primary structure comprises 470 residues: Siroheme synthase (470 aa).

A precorrin-2 dehydrogenase /sirohydrochlorin ferrochelatase region spans residues 1–201 (MDYFPIFCQL…NDHVQADQHV (201 aa)). NAD(+)-binding positions include 22-23 (EI) and 43-44 (CE). Position 128 is a phosphoserine (S128). The tract at residues 213-470 (GEVVLVGAGP…KVTECVAHVG (258 aa)) is uroporphyrinogen-III C-methyltransferase. Residue P222 participates in S-adenosyl-L-methionine binding. D245 acts as the Proton acceptor in catalysis. K267 (proton donor) is an active-site residue. Residues 298–300 (GGD), I303, 328–329 (TA), M379, and G408 contribute to the S-adenosyl-L-methionine site.

In the N-terminal section; belongs to the precorrin-2 dehydrogenase / sirohydrochlorin ferrochelatase family. This sequence in the C-terminal section; belongs to the precorrin methyltransferase family.

It catalyses the reaction uroporphyrinogen III + 2 S-adenosyl-L-methionine = precorrin-2 + 2 S-adenosyl-L-homocysteine + H(+). The enzyme catalyses precorrin-2 + NAD(+) = sirohydrochlorin + NADH + 2 H(+). It carries out the reaction siroheme + 2 H(+) = sirohydrochlorin + Fe(2+). Its pathway is cofactor biosynthesis; adenosylcobalamin biosynthesis; precorrin-2 from uroporphyrinogen III: step 1/1. It functions in the pathway cofactor biosynthesis; adenosylcobalamin biosynthesis; sirohydrochlorin from precorrin-2: step 1/1. It participates in porphyrin-containing compound metabolism; siroheme biosynthesis; precorrin-2 from uroporphyrinogen III: step 1/1. The protein operates within porphyrin-containing compound metabolism; siroheme biosynthesis; siroheme from sirohydrochlorin: step 1/1. Its pathway is porphyrin-containing compound metabolism; siroheme biosynthesis; sirohydrochlorin from precorrin-2: step 1/1. Its function is as follows. Multifunctional enzyme that catalyzes the SAM-dependent methylations of uroporphyrinogen III at position C-2 and C-7 to form precorrin-2 via precorrin-1. Then it catalyzes the NAD-dependent ring dehydrogenation of precorrin-2 to yield sirohydrochlorin. Finally, it catalyzes the ferrochelation of sirohydrochlorin to yield siroheme. This Yersinia pestis protein is Siroheme synthase.